The following is a 509-amino-acid chain: Scavenger receptor class B member 1 (509 aa).

Topologically, residues Met1 to Ala11 are cytoplasmic. Residues Leu12 to Val32 form a helical membrane-spanning segment. Residues Pro33 to Val440 lie on the Extracellular side of the membrane. N-linked (GlcNAc...) asparagine glycans are attached at residues Asn102, Asn108, Asn116, Asn173, Asn212, Asn227, Asn255, Asn288, Asn310, Asn330, and Asn383. Residues Cys251 and Cys384 are joined by a disulfide bond. A helical membrane pass occupies residues Leu441–Ile461. The S-palmitoyl cysteine moiety is linked to residue Cys462. The Cytoplasmic portion of the chain corresponds to Cys462 to Leu509.

It belongs to the CD36 family. The C-terminal region binds to PDZK1. Post-translationally, N-glycosylated. The six cysteines of the extracellular domain are all involved in intramolecular disulfide bonds. Expressed primarily in liver, ovary and adrenal gland, and, at lower levels in other non-placental steroidogenic tissues, including adipose tissue, mammary gland and testis (at protein level). Isoform 2 is expressed at lower levels than isoform 1 in liver, testis and adrenal gland. At the mRNA, but not at the protein level, isoform 2 is the predominant isoform in testis (80%).

The protein resides in the cell membrane. The protein localises to the membrane. It is found in the caveola. Its function is as follows. Receptor for different ligands such as phospholipids, cholesterol ester, lipoproteins, phosphatidylserine and apoptotic cells. Both isoform 1 and isoform 2 act as receptors for HDL, mediating selective uptake of cholesteryl ether and HDL-dependent cholesterol efflux. Also facilitates the flux of free and esterified cholesterol between the cell surface and apoB-containing lipoproteins and modified lipoproteins, although less efficiently than HDL. May be involved in the phagocytosis of apoptotic cells, via its phosphatidylserine binding activity. In Mus musculus (Mouse), this protein is Scavenger receptor class B member 1 (Scarb1).